Reading from the N-terminus, the 176-residue chain is ADP-ribosylation factor-like protein 8d (176 aa).

GTP-binding positions include 21–26 (NSGKTS), 40–43 (MIPT), 62–66 (DLGGQ), and 121–124 (NKID).

Belongs to the small GTPase superfamily. Arf family. In terms of assembly, interacts with tubulin.

The protein resides in the late endosome membrane. Its subcellular location is the lysosome membrane. It is found in the cytoplasm. It localises to the cytoskeleton. The protein localises to the spindle. Its function is as follows. May play a role in lysosome motility. May play a role in chromosome segregation. The polypeptide is ADP-ribosylation factor-like protein 8d (Arabidopsis thaliana (Mouse-ear cress)).